A 90-amino-acid polypeptide reads, in one-letter code: Transcriptional repressor SdpR (90 aa).

In terms of domain architecture, HTH arsR-type spans 1 to 87 (MNNVFKAISD…WMLNFINKGD (87 aa)). A DNA-binding region (H-T-H motif) is located at residues 39-62 (PSISHHLNILKQAEVISDHRKGQF).

It is found in the cytoplasm. Represses the transcription of the sdpIR operon and of several other operons that probably contribute to delaying commitment to sporulation. The protein is Transcriptional repressor SdpR (sdpR) of Bacillus subtilis (strain 168).